The sequence spans 306 residues: MRVRVAVPATTANLGPGFDCLGAALTLYNHFWFAPASTGELEITARGMDAEKISGDRDNLVYRAFAAFFEKQEQPVPALKLEIELAVPLARGLGSSATAIVAGLVGANALAGSPWSNAQLCDLATELEGHPDNVVPALLGGCRLAARDRQNQWAIADLDWHPDFIPVVAIPDFELSTEAARQVLPTQYSRSDAIFNAAHVGLVVRSLASGNGEWLAAALQDRLHQPYRQALIPGYAAVETAALEAGAFGLVISGAGPTLLAISSPDRAEAVRQAMLTTWQATGLSVRAEILAIAESGTQIEQETEN.

Residue 88-98 (PLARGLGSSAT) coordinates ATP.

This sequence belongs to the GHMP kinase family. Homoserine kinase subfamily.

It is found in the cytoplasm. It catalyses the reaction L-homoserine + ATP = O-phospho-L-homoserine + ADP + H(+). It functions in the pathway amino-acid biosynthesis; L-threonine biosynthesis; L-threonine from L-aspartate: step 4/5. Its function is as follows. Catalyzes the ATP-dependent phosphorylation of L-homoserine to L-homoserine phosphate. The chain is Homoserine kinase from Synechococcus sp. (strain ATCC 27144 / PCC 6301 / SAUG 1402/1) (Anacystis nidulans).